The sequence spans 275 residues: Adaptin ear-binding coat-associated protein 1 (275 aa).

Residues 168–275 (AKKGGASKPR…APQPSNWVQF (108 aa)) are disordered. Residues 187-201 (LPPPPGGKVTIPPPS) are compositionally biased toward pro residues. The residue at position 211 (T211) is a Phosphothreonine. Low complexity predominate over residues 233–248 (SPAPVSTSAPAPVSTS). 2 short sequence motifs (WXXF motif) span residues 252-255 (WGDF) and 272-275 (WVQF). Residues 256 to 275 (STASSSVPNQAPQPSNWVQF) show a composition bias toward polar residues.

It belongs to the NECAP family. Interacts with AP1G1 and AP2A1 components of the adapter protein complexes AP-1 and AP-2. Interacts with the GAE domain proteins GGA1, GGA2 and GGA3. As to expression, expressed primarily in brain (at protein level).

It localises to the cytoplasmic vesicle. It is found in the clathrin-coated vesicle membrane. The protein resides in the cell membrane. Its function is as follows. Involved in endocytosis. The protein is Adaptin ear-binding coat-associated protein 1 (Necap1) of Mus musculus (Mouse).